Reading from the N-terminus, the 1397-residue chain is Ankyrin repeat domain-containing protein 30A (1397 aa).

ANK repeat units lie at residues 72 to 101 (QKRT…QLDV), 105 to 134 (EHRT…DINL), 138 to 167 (YGNT…VIEV), 171 to 200 (ASLT…NANA), 204 to 233 (YKCT…DVFA), and 237 to 271 (CGVT…HQNT). Positions 267–279 (NHQNTNPEGTSAG) are enriched in polar residues. 4 disordered regions span residues 267-376 (NHQN…TWPA), 453-482 (PTKE…EYSC), 782-807 (QTLR…WDSE), and 902-931 (TLRA…LRET). 2 stretches are compositionally biased toward basic and acidic residues: residues 290 to 304 (RTPD…KTPD) and 312 to 326 (RTPD…KTPD). The segment covering 455–467 (KESSTKASANDQR) has biased composition (polar residues). 2 stretches are compositionally biased toward basic and acidic residues: residues 782 to 800 (QTLR…KDYE) and 913 to 931 (SKQK…LRET). 2 coiled-coil regions span residues 998–1188 (VLKK…KQDK) and 1282–1327 (EHAQ…FQLQ).

As to expression, mainly expressed in breast and testis. A very faint signal is detected in placenta. Also expressed in many breast cancer cells.

This chain is Ankyrin repeat domain-containing protein 30A (ANKRD30A), found in Homo sapiens (Human).